We begin with the raw amino-acid sequence, 467 residues long: UDP-N-acetylmuramate--L-alanine ligase (467 aa).

114 to 120 (GTHGKTT) contributes to the ATP binding site.

It belongs to the MurCDEF family.

Its subcellular location is the cytoplasm. It carries out the reaction UDP-N-acetyl-alpha-D-muramate + L-alanine + ATP = UDP-N-acetyl-alpha-D-muramoyl-L-alanine + ADP + phosphate + H(+). Its pathway is cell wall biogenesis; peptidoglycan biosynthesis. Its function is as follows. Cell wall formation. This Nitrobacter winogradskyi (strain ATCC 25391 / DSM 10237 / CIP 104748 / NCIMB 11846 / Nb-255) protein is UDP-N-acetylmuramate--L-alanine ligase.